The primary structure comprises 201 residues: Large ribosomal subunit protein uL4 (201 aa).

Positions 39-72 (RRGTASTKTRAQVSKSGKKMYSQKGTGNARHGDR) are disordered. The segment covering 42–53 (TASTKTRAQVSK) has biased composition (polar residues).

The protein belongs to the universal ribosomal protein uL4 family. In terms of assembly, part of the 50S ribosomal subunit.

Functionally, one of the primary rRNA binding proteins, this protein initially binds near the 5'-end of the 23S rRNA. It is important during the early stages of 50S assembly. It makes multiple contacts with different domains of the 23S rRNA in the assembled 50S subunit and ribosome. Its function is as follows. Forms part of the polypeptide exit tunnel. In Deinococcus deserti (strain DSM 17065 / CIP 109153 / LMG 22923 / VCD115), this protein is Large ribosomal subunit protein uL4.